The following is a 249-amino-acid chain: Type III pantothenate kinase (249 aa).

6–13 lines the ATP pocket; that stretch reads DCGNSFIK. Substrate-binding positions include tyrosine 93 and 100–103; that span reads GMDR. Aspartate 102 serves as the catalytic Proton acceptor. Aspartate 122 is a K(+) binding site. Residue threonine 125 coordinates ATP. Threonine 181 serves as a coordination point for substrate.

Belongs to the type III pantothenate kinase family. As to quaternary structure, homodimer. Requires NH4(+) as cofactor. K(+) is required as a cofactor.

Its subcellular location is the cytoplasm. The catalysed reaction is (R)-pantothenate + ATP = (R)-4'-phosphopantothenate + ADP + H(+). It participates in cofactor biosynthesis; coenzyme A biosynthesis; CoA from (R)-pantothenate: step 1/5. In terms of biological role, catalyzes the phosphorylation of pantothenate (Pan), the first step in CoA biosynthesis. This is Type III pantothenate kinase from Pseudomonas putida (strain ATCC 700007 / DSM 6899 / JCM 31910 / BCRC 17059 / LMG 24140 / F1).